The sequence spans 155 residues: Ribosomal RNA large subunit methyltransferase H (155 aa).

Residues Leu72, Gly103, and 122–127 contribute to the S-adenosyl-L-methionine site; that span reads LSTMTL.

It belongs to the RNA methyltransferase RlmH family. Homodimer.

It localises to the cytoplasm. The enzyme catalyses pseudouridine(1915) in 23S rRNA + S-adenosyl-L-methionine = N(3)-methylpseudouridine(1915) in 23S rRNA + S-adenosyl-L-homocysteine + H(+). In terms of biological role, specifically methylates the pseudouridine at position 1915 (m3Psi1915) in 23S rRNA. This is Ribosomal RNA large subunit methyltransferase H from Nitrosomonas eutropha (strain DSM 101675 / C91 / Nm57).